The sequence spans 792 residues: Probable exo-1,4-beta-xylosidase xlnD (792 aa).

An N-terminal signal peptide occupies residues 1–20 (MSVAKSIAAVLVALLPGALA). N-linked (GlcNAc...) asparagine glycans are attached at residues Asn-23, Asn-87, Asn-118, Asn-142, and Asn-246. Asp-310 is an active-site residue. Residues Asn-326, Asn-385, Asn-404, Asn-440, Asn-477, Asn-518, Asn-679, and Asn-701 are each glycosylated (N-linked (GlcNAc...) asparagine).

It belongs to the glycosyl hydrolase 3 family.

The protein localises to the secreted. The enzyme catalyses Hydrolysis of (1-&gt;4)-beta-D-xylans, to remove successive D-xylose residues from the non-reducing termini.. It participates in glycan degradation; xylan degradation. In terms of biological role, xylan 1,4-beta-xylosidase involved in the hydrolysis of xylan, a major structural heterogeneous polysaccharide found in plant biomass representing the second most abundant polysaccharide in the biosphere, after cellulose. This is Probable exo-1,4-beta-xylosidase xlnD (xlnD) from Aspergillus fumigatus (strain ATCC MYA-4609 / CBS 101355 / FGSC A1100 / Af293) (Neosartorya fumigata).